The primary structure comprises 224 residues: NBPF family member NBPF6-like protein (224 aa).

An Olduvai domain is found at 159–224; sequence ENHHDRKDEE…ASVCDVQDQL (66 aa). Residues 198–209 show a composition bias toward basic and acidic residues; it reads YLTHSSHHDSHR. The segment at 198-224 is disordered; that stretch reads YLTHSSHHDSHRPPSSIASVCDVQDQL.

Belongs to the NBPF family.

This is NBPF family member NBPF6-like protein from Bos taurus (Bovine).